Here is a 245-residue protein sequence, read N- to C-terminus: Orotidine 5'-phosphate decarboxylase (245 aa).

Substrate is bound by residues aspartate 22, lysine 44, 71–80, threonine 131, arginine 192, glutamine 201, glycine 221, and arginine 222; that span reads DLKFHDIPNT. The Proton donor role is filled by lysine 73.

The protein belongs to the OMP decarboxylase family. Type 1 subfamily. As to quaternary structure, homodimer.

The catalysed reaction is orotidine 5'-phosphate + H(+) = UMP + CO2. The protein operates within pyrimidine metabolism; UMP biosynthesis via de novo pathway; UMP from orotate: step 2/2. Its function is as follows. Catalyzes the decarboxylation of orotidine 5'-monophosphate (OMP) to uridine 5'-monophosphate (UMP). This is Orotidine 5'-phosphate decarboxylase from Escherichia coli (strain K12 / MC4100 / BW2952).